Reading from the N-terminus, the 182-residue chain is ATP-dependent protease subunit HslV (182 aa).

The active site involves threonine 10. Residues alanine 166, cysteine 169, and serine 172 each contribute to the Na(+) site.

This sequence belongs to the peptidase T1B family. HslV subfamily. In terms of assembly, a double ring-shaped homohexamer of HslV is capped on each side by a ring-shaped HslU homohexamer. The assembly of the HslU/HslV complex is dependent on binding of ATP.

The protein localises to the cytoplasm. It carries out the reaction ATP-dependent cleavage of peptide bonds with broad specificity.. Its activity is regulated as follows. Allosterically activated by HslU binding. Functionally, protease subunit of a proteasome-like degradation complex believed to be a general protein degrading machinery. The sequence is that of ATP-dependent protease subunit HslV from Rickettsia felis (strain ATCC VR-1525 / URRWXCal2) (Rickettsia azadi).